A 574-amino-acid chain; its full sequence is Phospholipase B-like protein A (574 aa).

The N-terminal stretch at M1–S20 is a signal peptide. 3 N-linked (GlcNAc...) asparagine glycosylation sites follow: N159, N195, and N415.

It belongs to the phospholipase B-like family.

The protein resides in the secreted. Phospholipase that removes both fatty-acid chains from phosphatidylcholine and produces the water-soluble glycerophosphorylcholine. In addition to phosphatidylcholine deacylation, it also hydrolyzes phosphatidylinositol and phosphatidylethanolamine. This is Phospholipase B-like protein A (plbA) from Dictyostelium discoideum (Social amoeba).